The sequence spans 76 residues: Protein MATERNALLY EXPRESSED GENE 4 (76 aa).

The signal sequence occupies residues 1–27 (MEYRKRVDALVFFSLLLLGYFAAHAHG). A disulfide bond links C53 and C75.

Belongs to the MEG family. Expressed exclusively in endosperm.

This is Protein MATERNALLY EXPRESSED GENE 4 (MEG4) from Zea mays (Maize).